Consider the following 204-residue polypeptide: Small ribosomal subunit protein uS4 (204 aa).

Positions Ser-93–Glu-156 constitute an S4 RNA-binding domain.

Belongs to the universal ribosomal protein uS4 family. In terms of assembly, part of the 30S ribosomal subunit. Contacts protein S5. The interaction surface between S4 and S5 is involved in control of translational fidelity.

One of the primary rRNA binding proteins, it binds directly to 16S rRNA where it nucleates assembly of the body of the 30S subunit. In terms of biological role, with S5 and S12 plays an important role in translational accuracy. In Wolbachia pipientis wMel, this protein is Small ribosomal subunit protein uS4.